Reading from the N-terminus, the 451-residue chain is L-seryl-tRNA(Sec) selenium transferase (451 aa).

The residue at position 286 (Lys-286) is an N6-(pyridoxal phosphate)lysine.

This sequence belongs to the SelA family. The cofactor is pyridoxal 5'-phosphate.

Its subcellular location is the cytoplasm. It catalyses the reaction L-seryl-tRNA(Sec) + selenophosphate + H(+) = L-selenocysteinyl-tRNA(Sec) + phosphate. It participates in aminoacyl-tRNA biosynthesis; selenocysteinyl-tRNA(Sec) biosynthesis; selenocysteinyl-tRNA(Sec) from L-seryl-tRNA(Sec) (bacterial route): step 1/1. Functionally, converts seryl-tRNA(Sec) to selenocysteinyl-tRNA(Sec) required for selenoprotein biosynthesis. In Aliarcobacter butzleri (strain RM4018) (Arcobacter butzleri), this protein is L-seryl-tRNA(Sec) selenium transferase.